Here is a 396-residue protein sequence, read N- to C-terminus: Alanine racemase (396 aa).

The active-site Proton acceptor; specific for D-alanine is Lys46. Lys46 is modified (N6-(pyridoxal phosphate)lysine). A substrate-binding site is contributed by Arg145. Tyr280 functions as the Proton acceptor; specific for L-alanine in the catalytic mechanism. Substrate is bound at residue Met328.

This sequence belongs to the alanine racemase family. Pyridoxal 5'-phosphate is required as a cofactor.

It carries out the reaction L-alanine = D-alanine. It functions in the pathway amino-acid biosynthesis; D-alanine biosynthesis; D-alanine from L-alanine: step 1/1. Functionally, catalyzes the interconversion of L-alanine and D-alanine. May also act on other amino acids. This Brucella canis (strain ATCC 23365 / NCTC 10854 / RM-666) protein is Alanine racemase (alr).